A 239-amino-acid chain; its full sequence is Adapter protein MecA (239 aa).

Residues 118-128 show a composition bias toward basic and acidic residues; that stretch reads EQRTKEKEAQG. Residues 118–137 are disordered; sequence EQRTKEKEAQGSKRQKSSAR.

The protein belongs to the MecA family. In terms of assembly, homodimer.

Its function is as follows. Enables the recognition and targeting of unfolded and aggregated proteins to the ClpC protease or to other proteins involved in proteolysis. The polypeptide is Adapter protein MecA (Staphylococcus aureus (strain Mu3 / ATCC 700698)).